A 576-amino-acid chain; its full sequence is Low-affinity glucose transporter HXT4 (576 aa).

Positions 1-56 are disordered; that stretch reads MSEEAAYQEDTAVQNTPADALSPVESDSNSALSTPSNKAERDDMKDFDENHEESNN. Residues 1–66 are Cytoplasmic-facing; that stretch reads MSEEAAYQED…YVEIPKKPAS (66 aa). The span at 25–37 shows a compositional bias: polar residues; it reads ESDSNSALSTPSN. Over residues 38–54 the composition is skewed to basic and acidic residues; it reads KAERDDMKDFDENHEES. Residue K45 forms a Glycyl lysine isopeptide (Lys-Gly) (interchain with G-Cter in ubiquitin) linkage. The chain crosses the membrane as a helical span at residues 67 to 87; it reads AYVTVSICCLMVAFGGFVFGW. The Extracellular portion of the chain corresponds to 88 to 122; that stretch reads DTGTISGFVAQTDFIRRFGMKHHDGTYYLSKVRTG. The helical transmembrane segment at 123-143 threads the bilayer; it reads LIVSIFNIGCAIGGIILARLG. The Cytoplasmic portion of the chain corresponds to 144-149; the sequence is DMYGRK. A helical membrane pass occupies residues 150–170; it reads MGLIVVVVIYIIGIIIQIASI. At 171-180 the chain is on the extracellular side; it reads NKWYQYFIGR. Residues 181–201 form a helical membrane-spanning segment; sequence IISGLGVGGIAVLSPMLISEV. Residues 202 to 207 lie on the Cytoplasmic side of the membrane; the sequence is SPKHIR. A helical transmembrane segment spans residues 208-228; that stretch reads GTLVSCYQLMITLGIFLGYCT. Topologically, residues 229 to 242 are extracellular; the sequence is NYGTKTYTNSVQWR. Residues 243 to 263 form a helical membrane-spanning segment; it reads VPLGLGFAWALFMIGGMTFVP. The Cytoplasmic segment spans residues 264–346; sequence ESPRYLVEVG…IQSLQQLTGD (83 aa). Residues 347-363 traverse the membrane as a helical segment; it reads NYFFYYGTTVFTAVGLE. Residues 364 to 369 are Extracellular-facing; that stretch reads DSFETS. A helical transmembrane segment spans residues 370-387; that stretch reads IVLGIVNFASTFVGIFLV. At 388–394 the chain is on the cytoplasmic side; that stretch reads ERYGRRR. A helical transmembrane segment spans residues 395–415; it reads CLLWGAASMTACMVVFASVGV. Topologically, residues 416–437 are extracellular; it reads TRLWPNGKKNGSSKGAGNCMIV. N-linked (GlcNAc...) asparagine glycosylation occurs at N425. A helical transmembrane segment spans residues 438 to 458; it reads FTCFYLFCFATTWAPIPFVVN. Residues 459–475 are Cytoplasmic-facing; it reads SETFPLRVKSKCMAIAQ. The chain crosses the membrane as a helical span at residues 476–496; it reads ACNWIWGFLIGFFTPFISGAI. A topological domain (extracellular) is located at residue D497. Residues 498-518 traverse the membrane as a helical segment; sequence FYYGYVFMGCLVFSYFYVFFF. Over 519-576 the chain is Cytoplasmic; the sequence is VPETKGLTLEEVNTLWEEGVLPWKSPSWVPPNKRGTDYNADDLMHDDQPFYKKMFGKK.

This sequence belongs to the major facilitator superfamily. Sugar transporter (TC 2.A.1.1) family.

It is found in the cell membrane. Its activity is regulated as follows. Xylose uptake is strongly inhibited by glucose. Low-affinity glucose transporter. Can also transport xylose. The protein is Low-affinity glucose transporter HXT4 (HXT4) of Saccharomyces cerevisiae (strain YJM789) (Baker's yeast).